A 335-amino-acid polypeptide reads, in one-letter code: Holliday junction branch migration complex subunit RuvB (335 aa).

The interval 4–184 (VDRIVSANAK…FGIVQRLEFY (181 aa)) is large ATPase domain (RuvB-L). ATP-binding positions include I23, R24, G65, K68, T69, T70, 131 to 133 (EDY), R174, Y184, and R221. Position 69 (T69) interacts with Mg(2+). A small ATPAse domain (RuvB-S) region spans residues 185–255 (SVEDLASIVT…IAQEALKMLD (71 aa)). Residues 258–335 (LAGFDFMDRK…RHFGLEQIEK (78 aa)) are head domain (RuvB-H). 3 residues coordinate DNA: R294, R313, and R318.

It belongs to the RuvB family. Homohexamer. Forms an RuvA(8)-RuvB(12)-Holliday junction (HJ) complex. HJ DNA is sandwiched between 2 RuvA tetramers; dsDNA enters through RuvA and exits via RuvB. An RuvB hexamer assembles on each DNA strand where it exits the tetramer. Each RuvB hexamer is contacted by two RuvA subunits (via domain III) on 2 adjacent RuvB subunits; this complex drives branch migration. In the full resolvosome a probable DNA-RuvA(4)-RuvB(12)-RuvC(2) complex forms which resolves the HJ.

It is found in the cytoplasm. The catalysed reaction is ATP + H2O = ADP + phosphate + H(+). Functionally, the RuvA-RuvB-RuvC complex processes Holliday junction (HJ) DNA during genetic recombination and DNA repair, while the RuvA-RuvB complex plays an important role in the rescue of blocked DNA replication forks via replication fork reversal (RFR). RuvA specifically binds to HJ cruciform DNA, conferring on it an open structure. The RuvB hexamer acts as an ATP-dependent pump, pulling dsDNA into and through the RuvAB complex. RuvB forms 2 homohexamers on either side of HJ DNA bound by 1 or 2 RuvA tetramers; 4 subunits per hexamer contact DNA at a time. Coordinated motions by a converter formed by DNA-disengaged RuvB subunits stimulates ATP hydrolysis and nucleotide exchange. Immobilization of the converter enables RuvB to convert the ATP-contained energy into a lever motion, pulling 2 nucleotides of DNA out of the RuvA tetramer per ATP hydrolyzed, thus driving DNA branch migration. The RuvB motors rotate together with the DNA substrate, which together with the progressing nucleotide cycle form the mechanistic basis for DNA recombination by continuous HJ branch migration. Branch migration allows RuvC to scan DNA until it finds its consensus sequence, where it cleaves and resolves cruciform DNA. This is Holliday junction branch migration complex subunit RuvB from Histophilus somni (strain 129Pt) (Haemophilus somnus).